We begin with the raw amino-acid sequence, 1104 residues long: Transient receptor potential cation channel subfamily M member 8 (1104 aa).

At 1–733 (MSFEGARLSM…LWYYVAFFTS (733 aa)) the chain is on the cytoplasmic side. Residues 734–758 (PFVVFSWNVVFYIAFLLLFAYVLLM) form a helical membrane-spanning segment. Over 759–765 (DFHSVPH) the chain is Extracellular. The helical transmembrane segment at 766 to 789 (TPELILYALVFVLFCDEVRQWYMN) threads the bilayer. Glu782 and Gln785 together coordinate Ca(2+). The Cytoplasmic portion of the chain corresponds to 790–796 (GVNYFTD). Residues 797 to 817 (LWNVMDTLGLFYFIAGIVFRL) traverse the membrane as a helical segment. 2 residues coordinate Ca(2+): Asn799 and Asp802. The Extracellular portion of the chain corresponds to 818 to 822 (HSSNK). The helical transmembrane segment at 823–848 (SSLYSGRVIFCLDYIIFTLRLIHIFT) threads the bilayer. The Cytoplasmic portion of the chain corresponds to 849–853 (VSRNL). Residues 854 to 890 (GPKIIMLQRMLIDVFFFLFLFAVWMVAFGVARQGILR) form a helical membrane-spanning segment. The Extracellular portion of the chain corresponds to 891 to 895 (QNEQR). The segment at residues 896-912 (WRWIFRSVIYEPYLAMF) is an intramembrane region (pore-forming). At 913-953 (GQVPSDVDSTTYDFSHCTFSGNESKPLCVELDEYNLPRFPE) the chain is on the extracellular side. The helical transmembrane segment at 954-984 (WITIPLVCIYMLSTNILLVNLLVAMFGYTVG) threads the bilayer. Residues 985–1104 (IVQENNDQVW…LLKEIANKIK (120 aa)) are Cytoplasmic-facing. Residues 1067–1104 (INTKANDNAEEMRHRFRQLDTKLNDLKGLLKEIANKIK) are a coiled coil.

This sequence belongs to the transient receptor (TC 1.A.4) family. LTrpC subfamily. TRPM8 sub-subfamily. Homotetramer. Interacts (via N-terminus and C-terminus domains) with TCAF1; the interaction stimulates TRPM8 channel activity. Interacts (via N-terminus and C-terminus domains) with TCAF2; the interaction inhibits TRPM8 channel activity. In terms of tissue distribution, expressed in dorsal root and trigeminal ganglia. Specifically expressed in a subset of sensory neurons, including cold-sensitive neurons in trigeminal neurons.

It localises to the cell membrane. Its subcellular location is the membrane raft. The enzyme catalyses Ca(2+)(in) = Ca(2+)(out). It carries out the reaction Na(+)(in) = Na(+)(out). It catalyses the reaction K(+)(in) = K(+)(out). Its activity is regulated as follows. Activated by cold temperatures and by both natural and synthetic cooling compounds such as menthol and icilin. Activation of the channel requires the presence of PI(4,5)P2; PI(4,5)P2 is necessary to gate the channel. Activated by intracellular Ca(2+). Non-selective ion channel permeable to monovalent and divalent cations, including Na(+), K(+), and Ca(2+), with higher permeability for Ca(2+). Activated by multiple factors, such as temperature, voltage, pressure, and changes in osmolality. Activated by cool temperatures (&lt;23-28 degrees Celsius) and by chemical ligands evoking a sensation of coolness, such as menthol and icilin, therefore plays a central role in the detection of environmental cold temperatures. TRPM8 is a voltage-dependent channel; its activation by cold or chemical ligands shifts its voltage thresholds towards physiological membrane potentials, leading to the opening of the channel. In addition to its critical role in temperature sensing, regulates basal tear secretion by sensing evaporation-induced cooling and changes in osmolality. The protein is Transient receptor potential cation channel subfamily M member 8 (Trpm8) of Rattus norvegicus (Rat).